Reading from the N-terminus, the 311-residue chain is Exosome complex component Rrp4 (311 aa).

Residues 63-131 (GDVVIGEITD…EVKKVKLGLK (69 aa)) form the S1 motif domain. In terms of domain architecture, KH spans 139–197 (RDGILVYITPTKVPRLIGKRGSMINMVKEKTHCDIVVGQNGVVWIKGEPDMERIAEKVV). Residues 222 to 311 (GVEPEIQVEE…EVKDENNSER (90 aa)) form a disordered region. The span at 241-300 (PESEDFEEASDYSEDVEVSPESEDIEEVSDESEDLEVESEDVEEGTDTPAAEEDDGEAGD) shows a compositional bias: acidic residues. Basic and acidic residues predominate over residues 301-311 (AEVKDENNSER).

This sequence belongs to the RRP4 family. Component of the archaeal exosome complex. Forms a trimer of Rrp4 and/or Csl4 subunits. The trimer associates with a hexameric ring-like arrangement composed of 3 Rrp41-Rrp42 heterodimers.

It localises to the cytoplasm. Functionally, non-catalytic component of the exosome, which is a complex involved in RNA degradation. Increases the RNA binding and the efficiency of RNA degradation. Confers strong poly(A) specificity to the exosome. This Methanothermobacter thermautotrophicus (strain ATCC 29096 / DSM 1053 / JCM 10044 / NBRC 100330 / Delta H) (Methanobacterium thermoautotrophicum) protein is Exosome complex component Rrp4.